Consider the following 498-residue polypeptide: GPI mannosyltransferase 4 (498 aa).

Residues 11–31 (FYLLTIVFRFVFTLSDSYIHP) traverse the membrane as a helical segment. An N-linked (GlcNAc...) asparagine glycan is attached at N47. Residues 63-83 (SLAPLYFIYGPLLYFIKFFKL) traverse the membrane as a helical segment. Residue N84 is glycosylated (N-linked (GlcNAc...) asparagine). The next 9 membrane-spanning stretches (helical) occupy residues 96 to 116 (LQIS…MLPS), 140 to 160 (LFSN…IDDL), 189 to 209 (LGIF…WFVM), 222 to 242 (LVMG…ILFG), 247 to 267 (VVAE…NLLY), 282 to 302 (YYTH…IFFV), 310 to 330 (TPFL…HQEL), 332 to 348 (FLIP…DFTL), and 350 to 370 (WVQP…SILM). 2 N-linked (GlcNAc...) asparagine glycosylation sites follow: N408 and N473.

This sequence belongs to the glycosyltransferase 22 family. PIGZ subfamily.

It is found in the endoplasmic reticulum membrane. It participates in glycolipid biosynthesis; glycosylphosphatidylinositol-anchor biosynthesis. Alpha-1,2-mannosyltransferase involved in glycosylphosphatidylinositol-anchor biosynthesis. Transfers a fourth mannose to trimannosyl-GPIs during GPI precursor assembly. The presence of a fourth mannose in GPI is essential in fungi. The sequence is that of GPI mannosyltransferase 4 (SMP3) from Candida albicans (strain SC5314 / ATCC MYA-2876) (Yeast).